Here is a 161-residue protein sequence, read N- to C-terminus: Regulator of ribonuclease activity A (161 aa).

The protein belongs to the RraA family. Homotrimer. Binds to both RNA-binding sites in the C-terminal region of Rne and to RhlB.

Its subcellular location is the cytoplasm. In terms of biological role, globally modulates RNA abundance by binding to RNase E (Rne) and regulating its endonucleolytic activity. Can modulate Rne action in a substrate-dependent manner by altering the composition of the degradosome. Modulates RNA-binding and helicase activities of the degradosome. The polypeptide is Regulator of ribonuclease activity A (Yersinia enterocolitica serotype O:8 / biotype 1B (strain NCTC 13174 / 8081)).